The chain runs to 322 residues: Cysteine synthase (322 aa).

Residues Asn-8 and Arg-35 each contribute to the hydrogen sulfide site. The residue at position 42 (Lys-42) is an N6-(pyridoxal phosphate)lysine. Pyridoxal 5'-phosphate contacts are provided by residues Asn-72 and 177-181; that span reads GTGGT. Leu-269 is a binding site for hydrogen sulfide. Pyridoxal 5'-phosphate is bound at residue Ser-273.

Belongs to the cysteine synthase/cystathionine beta-synthase family. As to quaternary structure, homodimer. Pyridoxal 5'-phosphate serves as cofactor.

The enzyme catalyses O-acetyl-L-serine + hydrogen sulfide = L-cysteine + acetate. It participates in amino-acid biosynthesis; L-cysteine biosynthesis; L-cysteine from L-serine: step 2/2. This is Cysteine synthase (cysK) from Buchnera aphidicola subsp. Schizaphis graminum (strain Sg).